The following is a 162-amino-acid chain: Corticoliberin-1 (162 aa).

The signal sequence occupies residues Met1 to Ala24. Positions Ile25–Arg119 are excised as a propeptide. Phe160 carries the post-translational modification Phenylalanine amide.

Belongs to the sauvagine/corticotropin-releasing factor/urotensin I family.

Its subcellular location is the secreted. This hormone from hypothalamus regulates the release of corticotropin from pituitary gland. The chain is Corticoliberin-1 (crf1) from Catostomus commersonii (White sucker).